Here is a 128-residue protein sequence, read N- to C-terminus: Lymphocyte antigen 6D (128 aa).

A signal peptide spans Met1 to Thr20. Positions Leu21–His108 constitute a UPAR/Ly6 domain. Cystine bridges form between Cys23–Cys45, Cys26–Cys32, Cys38–Cys63, Cys67–Cys86, and Cys87–Cys92. Asn98 is lipidated: GPI-anchor amidated asparagine. Positions Ala99–Leu128 are cleaved as a propeptide — removed in mature form.

In terms of tissue distribution, expressed exclusively at the outer cell surface of transitional epithelia and the keratinocyte of stratified squamous epithelia.

Its subcellular location is the cell membrane. May act as a specification marker at earliest stage specification of lymphocytes between B- and T-cell development. Marks the earliest stage of B-cell specification. This chain is Lymphocyte antigen 6D (LY6D), found in Homo sapiens (Human).